A 135-amino-acid polypeptide reads, in one-letter code: MIYGNGIDIQEIRKIQKAQEKRESFAKRILTVNELAIFEKYKGNRKYEFLAGRFSAKEAFSKAYGTGIGKKVGFQDIEILNDNQTGRPEIVKFPGDNKLQAKISISHSGEYVVTEVILEKLTWQTKMKKFLIKQK.

The Mg(2+) site is built by aspartate 8 and glutamate 58.

It belongs to the P-Pant transferase superfamily. AcpS family. Mg(2+) is required as a cofactor.

Its subcellular location is the cytoplasm. It carries out the reaction apo-[ACP] + CoA = holo-[ACP] + adenosine 3',5'-bisphosphate + H(+). In terms of biological role, transfers the 4'-phosphopantetheine moiety from coenzyme A to a Ser of acyl-carrier-protein. The chain is Holo-[acyl-carrier-protein] synthase from Ligilactobacillus salivarius (strain UCC118) (Lactobacillus salivarius).